Here is a 229-residue protein sequence, read N- to C-terminus: Auxin-responsive protein IAA17 (229 aa).

Positions 14–18 (LCLGL) match the EAR-like (transcriptional repression) motif. Residues 110–211 (AAFVKVSMDG…TCKRLRLMKG (102 aa)) enclose the PB1 domain.

It belongs to the Aux/IAA family. In terms of assembly, homodimers and heterodimers. Interacts with the auxin response factors ARF1 and IAA24. Interacts with IAA1. Interacts with TPL. Interacts (via PB1 domain) with ARF7 (via PB1 domain). In terms of processing, phosphorylated by phytochrome A in vitro.

Its subcellular location is the nucleus. Aux/IAA proteins are short-lived transcriptional factors that function as repressors of early auxin response genes at low auxin concentrations. Repression is thought to result from the interaction with auxin response factors (ARFs), proteins that bind to the auxin-responsive promoter element (AuxRE). Formation of heterodimers with ARF proteins may alter their ability to modulate early auxin response genes expression. In Arabidopsis thaliana (Mouse-ear cress), this protein is Auxin-responsive protein IAA17 (IAA17).